The sequence spans 481 residues: MAQGNEMHPRNPYRDKPPDFKALAIEYPEFRKFCQYVSNGKVTLDFRKDAAVRCLTQTLLKKDFSLNVNLPAGHLVPRVPQKLNYCLLIDDILQANSITSNVVGIDIGTGTSCIHALIGARHFGWKFVATDGDENSVQVAHENVARNEMGDSICVVHVNPAVKTVLMDVINSMPDSEFSFCMCNPPFFEKSDKEERFCEEPSLSNETYSNNFDFDMRSAPHSETIASSAELYVEGGEVAFVNRIIDDSVCLRDRIKFYTTMIGRKSSLKPLLQRLERFGENVKFLVHPLNQGKTKRWMLAWTFAKEMTLNTALKNSSISFQCPKPGLVKLMQEISRLGGRWSQEQPSVLVAEFKSVTWTNQRARRKANALLFENSAKRARWNTSSVACEAMMGNGDGKDSYTNSGNFVYSESFKTSDPAAVETSSQAYFPLPSGVTPRPIVKLRIQVDPDDKCDTLSFELISGAKQHLHQIVQYLKNLLCR.

K82, G108, D131, T164, and N184 together coordinate S-adenosyl-L-methionine.

It belongs to the methyltransferase superfamily. METTL16/RlmF family. Self-associates. Interacts with dlc-1; the interaction is direct, and is required for nuclear localization of mett-10.

The protein resides in the nucleus. The enzyme catalyses an adenosine in mRNA + S-adenosyl-L-methionine = an N(6)-methyladenosine in mRNA + S-adenosyl-L-homocysteine + H(+). It catalyses the reaction adenosine in U6 snRNA + S-adenosyl-L-methionine = N(6)-methyladenosine in U6 snRNA + S-adenosyl-L-homocysteine + H(+). RNA N6-methyltransferase that methylates adenosine residues at the N(6) position of a subset of RNAs and is involved in S-adenosyl-L-methionine homeostasis by regulating splicing of S-adenosylmethionine synthase transcripts (sams-3, sams-4 and sams-5). Able to N6-methylate a subset of mRNAs containing the 5'UACAGAAAC-3' nonamer sequence. Plays a key role in S-adenosyl-L-methionine homeostasis: under rich-diet conditions, catalyzes N6-methylation of S-adenosylmethionine synthase mRNAs (sams-3, sams-4 and sams-5), directly inhibiting splicing and protein production of S-adenosylmethionine synthase. In addition to mRNAs, also able to mediate N6-methylation of U6 small nuclear RNA (U6 snRNA). Required for gamete production, inhibiting germ cell proliferative fate and ensuring germ cell meiotic development. Also promotes progression of the mitotic cell cycle in those germ cells that continue to proliferate. Plays a role in the development of the vulva, somatic gonad and embryo. The chain is U6 small nuclear RNA (adenine-(43)-N(6))-methyltransferase from Caenorhabditis briggsae.